The sequence spans 191 residues: MGAYDGAEAPRAAPASTAANSRPSRLLLLHSLLLRLVAVVLSILVIAVMVHAKQRVMIFKAEWDNSKAFVALVTISAICLGYSFLQFILSAFHLCSKSWKSPTKCWAWMNFIADQILTYAMLGAAAAAAELAYIAKNGSSRAQWQPICSTFNTFCTRAGASIILSFIAVLALANSSAISAYHLFRRPSSSV.

Residues 1-25 (MGAYDGAEAPRAAPASTAANSRPSR) lie on the Cytoplasmic side of the membrane. A helical transmembrane segment spans residues 26 to 46 (LLLLHSLLLRLVAVVLSILVI). The Extracellular segment spans residues 47–68 (AVMVHAKQRVMIFKAEWDNSKA). Residues 69 to 89 (FVALVTISAICLGYSFLQFIL) traverse the membrane as a helical segment. At 90 to 114 (SAFHLCSKSWKSPTKCWAWMNFIAD) the chain is on the cytoplasmic side. Residues 115 to 135 (QILTYAMLGAAAAAAELAYIA) form a helical membrane-spanning segment. At 136–157 (KNGSSRAQWQPICSTFNTFCTR) the chain is on the extracellular side. A glycan (N-linked (GlcNAc...) asparagine) is linked at Asn137. The chain crosses the membrane as a helical span at residues 158 to 178 (AGASIILSFIAVLALANSSAI). The Cytoplasmic portion of the chain corresponds to 179 to 191 (SAYHLFRRPSSSV).

It belongs to the Casparian strip membrane proteins (CASP) family. As to quaternary structure, homodimer and heterodimers.

It localises to the cell membrane. The chain is CASP-like protein 2U4 from Selaginella moellendorffii (Spikemoss).